Here is a 358-residue protein sequence, read N- to C-terminus: 4-hydroxy-3-methylbut-2-en-1-yl diphosphate synthase (flavodoxin) (358 aa).

Residues cysteine 264, cysteine 267, cysteine 299, and glutamate 306 each contribute to the [4Fe-4S] cluster site.

It belongs to the IspG family. The cofactor is [4Fe-4S] cluster.

The catalysed reaction is (2E)-4-hydroxy-3-methylbut-2-enyl diphosphate + oxidized [flavodoxin] + H2O + 2 H(+) = 2-C-methyl-D-erythritol 2,4-cyclic diphosphate + reduced [flavodoxin]. The protein operates within isoprenoid biosynthesis; isopentenyl diphosphate biosynthesis via DXP pathway; isopentenyl diphosphate from 1-deoxy-D-xylulose 5-phosphate: step 5/6. In terms of biological role, converts 2C-methyl-D-erythritol 2,4-cyclodiphosphate (ME-2,4cPP) into 1-hydroxy-2-methyl-2-(E)-butenyl 4-diphosphate. This Helicobacter acinonychis (strain Sheeba) protein is 4-hydroxy-3-methylbut-2-en-1-yl diphosphate synthase (flavodoxin).